The chain runs to 330 residues: GTPase Obg (330 aa).

An Obg domain is found at 1–159; the sequence is MHFIDEVKIY…MWIHLSLKLL (159 aa). The OBG-type G domain maps to 160–327; the sequence is SDVGLVGLPN…IVKLALETIK (168 aa). GTP contacts are provided by residues 166–173, 191–195, 212–215, 279–282, and 308–310; these read GLPNAGKS, FTTLV, DIPG, NKCD, and STC. The Mg(2+) site is built by S173 and T193.

It belongs to the TRAFAC class OBG-HflX-like GTPase superfamily. OBG GTPase family. Monomer. Requires Mg(2+) as cofactor.

The protein resides in the cytoplasm. In terms of biological role, an essential GTPase which binds GTP, GDP and possibly (p)ppGpp with moderate affinity, with high nucleotide exchange rates and a fairly low GTP hydrolysis rate. Plays a role in control of the cell cycle, stress response, ribosome biogenesis and in those bacteria that undergo differentiation, in morphogenesis control. In Rickettsia rickettsii (strain Iowa), this protein is GTPase Obg.